A 987-amino-acid chain; its full sequence is Leucine--tRNA ligase (987 aa).

The 'HIGH' region signature appears at 69-80 (PYPSGKGLHVGH). A 'KMSKS' region motif is present at residues 760-764 (KMGKS). Lys-763 contacts ATP.

The protein belongs to the class-I aminoacyl-tRNA synthetase family.

It is found in the cytoplasm. The enzyme catalyses tRNA(Leu) + L-leucine + ATP = L-leucyl-tRNA(Leu) + AMP + diphosphate. The chain is Leucine--tRNA ligase from Bifidobacterium longum (strain DJO10A).